A 312-amino-acid chain; its full sequence is Ribosomal RNA small subunit methyltransferase H (312 aa).

S-adenosyl-L-methionine contacts are provided by residues 35–37 (GGH), Asp-55, Phe-80, Asp-102, and Gln-109.

This sequence belongs to the methyltransferase superfamily. RsmH family.

The protein resides in the cytoplasm. The enzyme catalyses cytidine(1402) in 16S rRNA + S-adenosyl-L-methionine = N(4)-methylcytidine(1402) in 16S rRNA + S-adenosyl-L-homocysteine + H(+). Specifically methylates the N4 position of cytidine in position 1402 (C1402) of 16S rRNA. The sequence is that of Ribosomal RNA small subunit methyltransferase H from Pseudoalteromonas translucida (strain TAC 125).